Here is a 317-residue protein sequence, read N- to C-terminus: Transcription initiation factor IIB 3 (317 aa).

Over residues 1-14 (MERATREREKEQRE) the composition is skewed to basic and acidic residues. The segment at 1–25 (MERATREREKEQREQAQTNDEAQQC) is disordered. The TFIIB-type zinc-finger motif lies at 21-50 (EAQQCPECNSANVITDQSERVCEDCGLVLE). Cys-25, Cys-28, Cys-42, and Cys-45 together coordinate Zn(2+). The disordered stretch occupies residues 62-83 (AFNSSERDQKSRVGAPTTKTMH). Tandem repeats lie at residues 136–219 (SEID…AQEL) and 230–311 (EYLP…EQIE).

Belongs to the TFIIB family.

In terms of biological role, stabilizes TBP binding to an archaeal box-A promoter. Also responsible for recruiting RNA polymerase II to the pre-initiation complex (DNA-TBP-TFIIB). The sequence is that of Transcription initiation factor IIB 3 from Halobacterium salinarum (strain ATCC 700922 / JCM 11081 / NRC-1) (Halobacterium halobium).